A 272-amino-acid chain; its full sequence is MNFFESLDTAAWRNQSRLCVGLDPEPARMPDCLPKDAEGIYTFCAAIMDATVDLVCAYKPNVAFFEAHGAAGWSALERLVKRRPGPPLILDAKRGDIGSTAEAYARSVFTTLGADAVTLSPYLGSDALEPFLRHADRGCFILCKTSNPGSGDLQDARLADGRPLYLAVAEMARDCWNMRGNVGLVVGATHPAALADIRRACPDMLILAPGVGAQGGDLEATVRAAAAGDDPRLIVNVSRTVLYADRGANFAAAARTAARQLRDAINAALRAV.

Catalysis depends on Lys93, which acts as the Proton donor.

It belongs to the OMP decarboxylase family. Type 2 subfamily.

It carries out the reaction orotidine 5'-phosphate + H(+) = UMP + CO2. The protein operates within pyrimidine metabolism; UMP biosynthesis via de novo pathway; UMP from orotate: step 2/2. In Roseiflexus castenholzii (strain DSM 13941 / HLO8), this protein is Orotidine 5'-phosphate decarboxylase.